Consider the following 466-residue polypeptide: MDSTALKILQDKCICYICSDFMEDPVTSRCGHNFCFACLRLLWDDLQGNIFCPVCQTPFPPKSFSRNYQFRNMTETIRLLQKRQSKRKRQEEHTVCPKHDQPLVLFCVRDRDVLCTQCSLSVEHQGHYTCPIKKASSYHRKVLESAIATLKFGVKQVEEKLAVQHRRVLGLREEAQYQKIEIRYEIGQIKLFLQSEYEAHLNESHMEELRSFSELNGYLETLLDHVSTAKDLLKEVEAIHERSDVTLLRAYHKLQNLKSPKPWLFRTKQYGLSLPAQYSGLSRIIKQFQADVTFDRDTAHPQLVISEDRKSVFYKEAWPCVCASPQKFHLWPALLGCKGFDSGRQYWEVKVGDKPRWTLGVCQAHFSGDWSNQSSGFWAIGRYAENSYVTYGPLRTEFLPVVRPSKVGIFLDYELGELSFYNMNDRSLLYTFRNSFTSTLWPYFYIGTDSESLEILTHPTPDTGSY.

The segment at 15-56 (CYICSDFMEDPVTSRCGHNFCFACLRLLWDDLQGNIFCPVCQ) adopts an RING-type zinc-finger fold. A B box-type zinc finger spans residues 91–132 (EEHTVCPKHDQPLVLFCVRDRDVLCTQCSLSVEHQGHYTCPI). 4 residues coordinate Zn(2+): Cys-96, His-99, Cys-118, and His-124. The stretch at 171–223 (LREEAQYQKIEIRYEIGQIKLFLQSEYEAHLNESHMEELRSFSELNGYLETLL) forms a coiled coil. The B30.2/SPRY domain occupies 272–462 (LSLPAQYSGL…LEILTHPTPD (191 aa)).

It belongs to the TRIM/RBCC family.

Its function is as follows. E3 SUMO-protein ligase that mediates SUMOylation of TAB2 leading to inhibition of NF-kappa-B and MAPK pathways by suppressing the TRAF6/TAB2/TAK1 complex. The polypeptide is E3 SUMO-protein ligase TRIM60 (Trim60) (Mus musculus (Mouse)).